The primary structure comprises 809 residues: Leucine--tRNA ligase (809 aa).

Residues 40–50 (PYPSGRIHMGH) carry the 'HIGH' region motif. The 'KMSKS' region motif lies at 579–583 (KMSKS). ATP is bound at residue Lys-582.

Belongs to the class-I aminoacyl-tRNA synthetase family.

The protein localises to the cytoplasm. The enzyme catalyses tRNA(Leu) + L-leucine + ATP = L-leucyl-tRNA(Leu) + AMP + diphosphate. In Campylobacter jejuni subsp. jejuni serotype O:23/36 (strain 81-176), this protein is Leucine--tRNA ligase.